We begin with the raw amino-acid sequence, 735 residues long: Ethylene receptor 1 (735 aa).

Helical transmembrane passes span 23–43 (ISDF…IYFV), 54–74 (VLVQ…INLW), and 92–112 (VLTA…IPDL). Cu cation-binding residues include cysteine 65 and histidine 69. The GAF domain maps to 158–307 (DRHTILKTTL…VVADQVAVAL (150 aa)). The Histidine kinase domain maps to 350–586 (VMNHEMRTPM…IFDVKLAISN (237 aa)). Histidine 353 is modified (phosphohistidine; by autocatalysis). Residues 609–726 (KVLVMDENGV…NMRNVLSDRL (118 aa)) form the Response regulatory domain. At aspartate 657 the chain carries 4-aspartylphosphate. Residue lysine 711 forms a Glycyl lysine isopeptide (Lys-Gly) (interchain with G-Cter in ubiquitin) linkage.

This sequence belongs to the ethylene receptor family. Homodimer; disulfide-linked. Cu cation is required as a cofactor. Activation probably requires a transfer of a phosphate group between a His in the transmitter domain and an Asp of the receiver domain.

The protein resides in the endoplasmic reticulum membrane. It catalyses the reaction ATP + protein L-histidine = ADP + protein N-phospho-L-histidine.. May act early in the ethylene signal transduction pathway, possibly as an ethylene receptor, or as a regulator of the pathway. The sequence is that of Ethylene receptor 1 (ETR1) from Brassica oleracea (Wild cabbage).